Here is a 216-residue protein sequence, read N- to C-terminus: Probable nicotinate-nucleotide adenylyltransferase (216 aa).

The protein belongs to the NadD family.

It carries out the reaction nicotinate beta-D-ribonucleotide + ATP + H(+) = deamido-NAD(+) + diphosphate. It functions in the pathway cofactor biosynthesis; NAD(+) biosynthesis; deamido-NAD(+) from nicotinate D-ribonucleotide: step 1/1. Its function is as follows. Catalyzes the reversible adenylation of nicotinate mononucleotide (NaMN) to nicotinic acid adenine dinucleotide (NaAD). This Shewanella baltica (strain OS223) protein is Probable nicotinate-nucleotide adenylyltransferase.